The following is a 29-amino-acid chain: Cyclotide mden-B (29 aa).

The segment at residues 1–29 (GLPICGETCFTGKCYTPGCTCSYPICKKN) is a cross-link (cyclopeptide (Gly-Asn)). 3 disulfides stabilise this stretch: Cys5–Cys19, Cys9–Cys21, and Cys14–Cys26.

Belongs to the cyclotide family. Moebius subfamily. This is a cyclic peptide.

Its function is as follows. Probably participates in a plant defense mechanism. The sequence is that of Cyclotide mden-B from Melicytus dentatus (Tree violet).